The following is a 361-amino-acid chain: Epi-isozizaene synthase (361 aa).

Positions 99, 103, 240, 244, and 248 each coordinate Mg(2+). The DDXXD motif motif lies at D99–D103.

The protein belongs to the terpene synthase family. Mg(2+) is required as a cofactor. It depends on Mn(2+) as a cofactor. Requires Fe(3+) as cofactor.

It carries out the reaction (2E,6E)-farnesyl diphosphate = (+)-epi-isozizaene + diphosphate. The protein operates within sesquiterpene biosynthesis; epi-isozizaene biosynthesis. Its function is as follows. Catalyzes the cyclization of farnesyl diphosphate (FPP) to the sesquiterpene epi-isozizaene. The sequence is that of Epi-isozizaene synthase (cyc1) from Streptomyces coelicolor (strain ATCC BAA-471 / A3(2) / M145).